The chain runs to 284 residues: Undecaprenyl-diphosphatase (284 aa).

Helical transmembrane passes span 7 to 27 (IILGIIEGITEWLPISSTGHL), 44 to 64 (EMFDVVIQLGAILSVVVLYFH), 90 to 110 (LWLKVLIAALPAAIIGLPLND), 116 to 136 (FYHFVPVAFMLIIYGVAFIVI), 167 to 187 (VLSLLPGTSRSGATIVGALLI), 197 to 217 (FTFFLGIPVMFGASFIKILHF), 229 to 249 (FGVLLVACLVAFGVSMIAIKF), and 259 to 279 (FTFFGKYRIVLGIVLLIYAAF).

The protein belongs to the UppP family.

It localises to the cell membrane. The enzyme catalyses di-trans,octa-cis-undecaprenyl diphosphate + H2O = di-trans,octa-cis-undecaprenyl phosphate + phosphate + H(+). Catalyzes the dephosphorylation of undecaprenyl diphosphate (UPP). Confers resistance to bacitracin. The polypeptide is Undecaprenyl-diphosphatase (Lactococcus lactis subsp. cremoris (strain SK11)).